Reading from the N-terminus, the 430-residue chain is MSNRKAKLSFENQSVEFPIYSPTLGKDVIDVKTLGNHGAYALDVGFYSTAACESKITFIDGEKGILLYRGYPIDQLADKSDYMEVCYLLMYGELPNKGEKEKFVRTIKEHTSVYEQVTKFFNGFHYDAHPMAMVLSTIGALSAFYHDALDITKPADRELSAIRLIAKMPTLAAMSYKYSIGQPFMHPRRAMNYAENFLHMLFGTPYEETEPDPVLARAMDRIFILHADHEQNASTTTVRVAGSTGANPFACISAGISALWGPAHGGANEACLNMLRKIGDEKNIGQYIKKAKDKNDPFRLMGFGHRVYKNYDPRAKVMQKTCYEVLDAVGRHNEPLFKLAIKLEKIALEDDYFIEKKLYPNVDFYSGLTLNAIGIPSNMFTVIFALSRTVGWISHWMEMMSSPDHRLARPRQLYTGETEREVISLDKRQA.

Catalysis depends on residues H305 and D363.

It belongs to the citrate synthase family. As to quaternary structure, homohexamer.

The catalysed reaction is oxaloacetate + acetyl-CoA + H2O = citrate + CoA + H(+). Its pathway is carbohydrate metabolism; tricarboxylic acid cycle; isocitrate from oxaloacetate: step 1/2. With respect to regulation, allosterically inhibited by NADH. The protein is Citrate synthase (gltA) of Coxiella burnetii (strain RSA 493 / Nine Mile phase I).